Here is a 130-residue protein sequence, read N- to C-terminus: Small ribosomal subunit protein uS9 (130 aa).

This sequence belongs to the universal ribosomal protein uS9 family.

In Bacillus anthracis (strain A0248), this protein is Small ribosomal subunit protein uS9.